A 413-amino-acid polypeptide reads, in one-letter code: MAEHSFDVNEVIKDFPILDQKVNGKRLAYLDSTATSQTPMQVLNVLEDYYKRYNSNVHRGVHTLGSLATDGYENARETVRRFINAKYFEEIIFTRGTTASINLVAHSYGDANVEEGDEIVVTEMEHHANIVPWQQLAKRKNATLKFIPMTADGELNIEDIKQTINDKTKIVAIAHISNVLGTINDVKTIAEIAHQHGAIISVDGAQAAPHMKLDMQEMNADFYSFSGHKMLGPTGIGVLFGKRELLQKMEPIEFGGDMIDFVSKYDATWADLPTKFEAGTPLIAQAIGLAEAIRYLERIGFDAIHKYEQELTIYAYEQMSAIEGIEIYGPPKDRRAGVITFNLQDVHPHDVATAVDTEGVAVRAGHHCAQPLMKWLNVSSTARASFYIYNTKEDIDQLINALKQTKEFFSYEF.

K229 is modified (N6-(pyridoxal phosphate)lysine). C368 (cysteine persulfide intermediate) is an active-site residue.

The protein belongs to the class-V pyridoxal-phosphate-dependent aminotransferase family. Csd subfamily. Requires pyridoxal 5'-phosphate as cofactor.

The enzyme catalyses (sulfur carrier)-H + L-cysteine = (sulfur carrier)-SH + L-alanine. Functionally, catalyzes the removal of elemental sulfur and selenium atoms from L-cysteine, L-cystine, L-selenocysteine, and L-selenocystine to produce L-alanine. The protein is Probable cysteine desulfurase (csd) of Staphylococcus aureus (strain Mu50 / ATCC 700699).